A 936-amino-acid polypeptide reads, in one-letter code: Isoleucine--tRNA ligase (936 aa).

The short motif at 58 to 68 (PYANGRAHLGT) is the 'HIGH' region element. Position 561 (glutamate 561) interacts with L-isoleucyl-5'-AMP. Residues 602–606 (KMSKS) carry the 'KMSKS' region motif. Lysine 605 provides a ligand contact to ATP. The Zn(2+) site is built by cysteine 899, cysteine 902, cysteine 919, and cysteine 922.

It belongs to the class-I aminoacyl-tRNA synthetase family. IleS type 1 subfamily. As to quaternary structure, monomer. The cofactor is Zn(2+).

It localises to the cytoplasm. The catalysed reaction is tRNA(Ile) + L-isoleucine + ATP = L-isoleucyl-tRNA(Ile) + AMP + diphosphate. In terms of biological role, catalyzes the attachment of isoleucine to tRNA(Ile). As IleRS can inadvertently accommodate and process structurally similar amino acids such as valine, to avoid such errors it has two additional distinct tRNA(Ile)-dependent editing activities. One activity is designated as 'pretransfer' editing and involves the hydrolysis of activated Val-AMP. The other activity is designated 'posttransfer' editing and involves deacylation of mischarged Val-tRNA(Ile). The chain is Isoleucine--tRNA ligase from Coxiella burnetii (strain CbuK_Q154) (Coxiella burnetii (strain Q154)).